A 412-amino-acid chain; its full sequence is [Pyruvate dehydrogenase (acetyl-transferring)] kinase isozyme 4, mitochondrial (412 aa).

Residues 138 to 368 (ILEYKDTCTV…DAIIYLKALS (231 aa)) enclose the Histidine kinase domain. ATP is bound by residues 254 to 261 (ELFKNAMR), Asp-293, 312 to 313 (ST), and 329 to 334 (GFGYGL).

The protein belongs to the PDK/BCKDK protein kinase family. Homodimer. Interacts with the pyruvate dehydrogenase complex subunit DLAT, and is part of the multimeric pyruvate dehydrogenase complex that contains multiple copies of pyruvate dehydrogenase (E1), dihydrolipoamide acetyltransferase (DLAT, E2) and lipoamide dehydrogenase (DLD, E3). In terms of tissue distribution, detected in skeletal muscle and heart.

The protein resides in the mitochondrion matrix. It carries out the reaction L-seryl-[pyruvate dehydrogenase E1 alpha subunit] + ATP = O-phospho-L-seryl-[pyruvate dehydrogenase E1 alpha subunit] + ADP + H(+). Kinase that plays a key role in regulation of glucose and fatty acid metabolism and homeostasis via phosphorylation of the pyruvate dehydrogenase subunits PDHA1 and PDHA2. This inhibits pyruvate dehydrogenase activity, and thereby regulates metabolite flux through the tricarboxylic acid cycle, down-regulates aerobic respiration and inhibits the formation of acetyl-coenzyme A from pyruvate. Inhibition of pyruvate dehydrogenase decreases glucose utilization and increases fat metabolism in response to prolonged fasting and starvation. Plays an important role in maintaining normal blood glucose levels under starvation, and is involved in the insulin signaling cascade. Via its regulation of pyruvate dehydrogenase activity, plays an important role in maintaining normal blood pH and in preventing the accumulation of ketone bodies under starvation. In the fed state, mediates cellular responses to glucose levels and to a high-fat diet. Regulates both fatty acid oxidation and de novo fatty acid biosynthesis. Plays a role in the generation of reactive oxygen species. Protects detached epithelial cells against anoikis. Plays a role in cell proliferation via its role in regulating carbohydrate and fatty acid metabolism. The sequence is that of [Pyruvate dehydrogenase (acetyl-transferring)] kinase isozyme 4, mitochondrial (PDK4) from Ictidomys tridecemlineatus (Thirteen-lined ground squirrel).